The sequence spans 89 residues: MRAVLTVIGKDNVGIVAGVSNKLAELNINIVDVSQTIMDGYFTMMMMCDISQITKEFDEVKAELAGKGEDLQVKIHIQREEIFNAMHKL.

Positions 4–78 constitute an ACT domain; it reads VLTVIGKDNV…EDLQVKIHIQ (75 aa).

Belongs to the UPF0237 family.

This is UPF0237 protein LMOf2365_0562 from Listeria monocytogenes serotype 4b (strain F2365).